The sequence spans 244 residues: 5-oxoprolinase subunit A (244 aa).

The protein belongs to the LamB/PxpA family. Forms a complex composed of PxpA, PxpB and PxpC.

It catalyses the reaction 5-oxo-L-proline + ATP + 2 H2O = L-glutamate + ADP + phosphate + H(+). Functionally, catalyzes the cleavage of 5-oxoproline to form L-glutamate coupled to the hydrolysis of ATP to ADP and inorganic phosphate. The sequence is that of 5-oxoprolinase subunit A from Escherichia coli (strain K12).